The sequence spans 628 residues: Alpha pinene synthase, chloroplastic (628 aa).

The N-terminal 46 residues, 1–46 (MSLGCITPLASAMVGPKLVRPLIHHNPLFHHKPLNRPYLQTKIPLR), are a transit peptide targeting the chloroplast. Mg(2+) contacts are provided by Asp-381, Asp-385, and Glu-532. The DDXXD motif signature appears at 381-385 (DDMYD).

Belongs to the terpene synthase family. Tpsa subfamily. It depends on Mg(2+) as a cofactor. Requires Mn(2+) as cofactor.

It localises to the plastid. Its subcellular location is the chloroplast. It catalyses the reaction (2E)-geranyl diphosphate = alpha-pinene + diphosphate. The protein operates within secondary metabolite biosynthesis; terpenoid biosynthesis. Monoterpene synthase involved in the biosynthesis of volatile compounds. Mediates the conversion of (2E)-geranyl diphosphate (GPP) into alpha-pinene. In Chamaecyparis formosensis (Formosan cypress), this protein is Alpha pinene synthase, chloroplastic.